Here is a 253-residue protein sequence, read N- to C-terminus: MRQLFVAGNWKMHGDKASIKTLVTGLNAKADSVGDVLVAVCPPAIYLDYTKNCLMAGEIALGGQNMAIEPVQGAYTGETSASMLKDVGCQYVILGHSERRAIYGETDQDIAAKVKTALDSGLTPILCVGETLEERESGQLESVISQQLDAVISEVGIDQFADVVIAYEPVWAIGTGKTASAQQAQDVHAFIRGQLAKLNPSVAEKVIIQYGGSVKPNNASELFSQPDIDGGLIGGASLNADDFIAICQAAGEQ.

9-11 provides a ligand contact to substrate; it reads NWK. H96 acts as the Electrophile in catalysis. Catalysis depends on E168, which acts as the Proton acceptor. Substrate-binding positions include G174, S213, and 234–235; that span reads GG.

The protein belongs to the triosephosphate isomerase family. As to quaternary structure, homodimer.

It is found in the cytoplasm. It catalyses the reaction D-glyceraldehyde 3-phosphate = dihydroxyacetone phosphate. Its pathway is carbohydrate biosynthesis; gluconeogenesis. The protein operates within carbohydrate degradation; glycolysis; D-glyceraldehyde 3-phosphate from glycerone phosphate: step 1/1. In terms of biological role, involved in the gluconeogenesis. Catalyzes stereospecifically the conversion of dihydroxyacetone phosphate (DHAP) to D-glyceraldehyde-3-phosphate (G3P). This Hydrogenovibrio crunogenus (strain DSM 25203 / XCL-2) (Thiomicrospira crunogena) protein is Triosephosphate isomerase.